The sequence spans 620 residues: Glutathione-regulated potassium-efflux system protein KefC (620 aa).

12 consecutive transmembrane segments (helical) span residues His-4–Val-24, Leu-26–Leu-46, Ser-54–Leu-74, Gly-90–Leu-110, Val-114–Met-134, Phe-149–Leu-169, Met-178–Leu-198, Val-218–Gly-238, Gly-270–Ile-290, Leu-294–Ile-314, Trp-327–Gln-347, and Ser-359–Asn-379. One can recognise an RCK N-terminal domain in the interval Gln-399–Thr-518. Positions Gly-597–Ser-620 are disordered.

The protein belongs to the monovalent cation:proton antiporter 2 (CPA2) transporter (TC 2.A.37) family. KefC subfamily. As to quaternary structure, homodimer. Interacts with the regulatory subunit KefF.

The protein localises to the cell inner membrane. In terms of biological role, pore-forming subunit of a potassium efflux system that confers protection against electrophiles. Catalyzes K(+)/H(+) antiport. This chain is Glutathione-regulated potassium-efflux system protein KefC, found in Shigella flexneri serotype 5b (strain 8401).